We begin with the raw amino-acid sequence, 461 residues long: Steroidogenic factor 1 (461 aa).

The segment at residues 10 to 85 is a DNA-binding region (nuclear receptor); sequence DELCPVCGDK…VGMRLEAVRA (76 aa). The segment at 13 to 33 adopts an NR C4-type zinc-finger fold; that stretch reads CPVCGDKVSGYHYGLLTCESC. N6-acetyllysine occurs at positions 34, 38, and 72. The segment at 49 to 73 adopts an NR C4-type zinc-finger fold; that stretch reads CTESQSCKIDKTQRKRCPFCRFQKC. A Glycyl lysine isopeptide (Lys-Gly) (interchain with G-Cter in SUMO) cross-link involves residue Lys-119. A disordered region spans residues 119-157; sequence KLETGPPMGVPPPPPPAPDYVLPPSLHGPEPKGLAAGPP. Pro residues predominate over residues 126 to 136; the sequence is MGVPPPPPPAP. Lys-194 is covalently cross-linked (Glycyl lysine isopeptide (Lys-Gly) (interchain with G-Cter in SUMO)). Ser-203 is subject to Phosphoserine; by CDK7. One can recognise an NR LBD domain in the interval 222-459; it reads NVPELILQLL…NLLIEMLQAK (238 aa). Residues 230–461 form an important for dimerization region; the sequence is LLQLEPDEDQ…LIEMLQAKQT (232 aa). The a 1,2-diacyl-sn-glycero-3-phosphocholine site is built by Gly-341, Tyr-436, and Lys-440. Residues Gly-341, Tyr-436, and Lys-440 each contribute to the a 1,2-diacylglycero-3-phosphoethanolamine site.

Belongs to the nuclear hormone receptor family. NR5 subfamily. Binds DNA as a monomer. Interacts with NR0B2 and PPARGC1A. Part of a complex consisting of SFPQ, NONO and NR5A1. Interacts with NCOA2. Interacts with DGKQ and CDK7. Binds to and activated by HIPK3. Acetylation stimulates the transcriptional activity. In terms of processing, sumoylation reduces CDK7-mediated phosphorylation on Ser-203. Post-translationally, phosphorylated on Ser-203 by CDK7. This phosphorylation promotes transcriptional activity. In terms of tissue distribution, high expressed in the adrenal cortex, the ovary, the testis, and the spleen.

It is found in the nucleus. In terms of biological role, transcriptional activator. Essential for sexual differentiation and formation of the primary steroidogenic tissues. Binds to the Ad4 site found in the promoter region of steroidogenic P450 genes such as CYP11A, CYP11B and CYP21B. Also regulates the AMH/Muellerian inhibiting substance gene as well as the AHCH and STAR genes. 5'-YCAAGGYC-3' and 5'-RRAGGTCA-3' are the consensus sequences for the recognition by NR5A1. The SFPQ-NONO-NR5A1 complex binds to the CYP17 promoter and regulates basal and cAMP-dependent transcriptional activity. Binds phosphatidylcholine. Binds phospholipids with a phosphatidylinositol (PI) headgroup, in particular PI(3,4)P2 and PI(3,4,5)P3. Activated by the phosphorylation of NR5A1 by HIPK3 leading to increased steroidogenic gene expression upon cAMP signaling pathway stimulation. The sequence is that of Steroidogenic factor 1 (NR5A1) from Homo sapiens (Human).